The sequence spans 342 residues: Protein RecA (342 aa).

65–72 (GPESSGKT) serves as a coordination point for ATP.

The protein belongs to the RecA family.

The protein resides in the cytoplasm. Can catalyze the hydrolysis of ATP in the presence of single-stranded DNA, the ATP-dependent uptake of single-stranded DNA by duplex DNA, and the ATP-dependent hybridization of homologous single-stranded DNAs. It interacts with LexA causing its activation and leading to its autocatalytic cleavage. This is Protein RecA from Teredinibacter turnerae (strain ATCC 39867 / T7901).